Consider the following 323-residue polypeptide: Viral cathepsin (323 aa).

The signal sequence occupies residues 1–16 (MNKILFYLFVYAVVKS). Positions 17 to 112 (AAYDPLKAPN…ILLDQPPGKG (96 aa)) are cleaved as a propeptide — activation peptide. Cystine bridges form between Cys133-Cys174, Cys167-Cys207, and Cys262-Cys310. The active site involves Cys136. Asn158 is a glycosylation site (N-linked (GlcNAc...) asparagine; by host). Catalysis depends on residues His269 and Asn289.

It belongs to the peptidase C1 family. Post-translationally, synthesized as an inactive proenzyme and activated by proteolytic removal of the inhibitory propeptide.

It catalyses the reaction Endopeptidase of broad specificity, hydrolyzing substrates of both cathepsin L and cathepsin B.. In terms of biological role, cysteine protease that plays an essential role in host liquefaction to facilitate horizontal transmission of the virus. May participate in the degradation of foreign protein expressed by the baculovirus system. The chain is Viral cathepsin (VCATH) from Bombyx mori (Silk moth).